We begin with the raw amino-acid sequence, 779 residues long: Angiomotin-like protein 2 (779 aa).

Disordered regions lie at residues 41–215 (GGAG…QYPH) and 263–308 (QYLQ…TSGS). 2 stretches are compositionally biased toward basic and acidic residues: residues 100–112 (KGEELPTYEEAKA) and 141–152 (RRQDEALRELRH). Residues 101-307 (GEELPTYEEA…SAQASSATSG (207 aa)) form a required for interaction with CDH5 region. At Y107 the chain carries Phosphotyrosine; by FGFR1. Residues 160 to 169 (ERLLQLSLER) show a composition bias toward low complexity. Residues 177–193 (HMSSSHSFPQLARNQQG) are compositionally biased toward polar residues. Positions 196 to 213 (LRGPPAEGPESRGPPPQY) are enriched in pro residues. Residues 220–307 (HETTTAVTDP…SAQASSATSG (88 aa)) form a required for interaction with CDH1 region. Residues 298 to 308 (SAQASSATSGS) are compositionally biased toward low complexity. Residues 308–581 (SAHLAQMEAV…KYLEERAMRQ (274 aa)) adopt a coiled-coil conformation. Residues K347 and K408 each participate in a glycyl lysine isopeptide (Lys-Gly) (interchain with G-Cter in ubiquitin) cross-link. Disordered stretches follow at residues 522–543 (RAQQRQAGAPGGSSGSGGSPEL) and 679–753 (TQGW…GCSS). The span at 530 to 539 (APGGSSGSGG) shows a compositional bias: gly residues. Composition is skewed to polar residues over residues 680–690 (QGWQGLSSSER) and 725–740 (DGSTQTEGPPDSTSTC). 2 positions are modified to phosphoserine: S759 and S762. Positions 776–779 (EILI) match the PDZ-binding motif.

The protein belongs to the angiomotin family. As to quaternary structure, part of a complex composed of AMOTL2, MAGI1 and CDH5, within the complex AMOTL2 acts as a scaffold protein for the interaction of MAGI1 with CDH5. The complex is required for coupling actin fibers to cell junctions in endothelial cells. Within the complex AMOTL2 (via its N-terminus) interacts with CDH5. Interacts (via N-terminus) with MAGI1. Interacts (via N-terminus) with ACTB; the interaction facilitates binding of cell junction complexes to actin fibers in endothelial cells. Interacts with CDH1; the interaction may facilitate binding of radial actin fibers to cell junction complexes. Interacts with SRC. Interacts with YAP1; the interaction is required for ubiquitination of AMOTL2 and localization of YAP1 to tight junctions. Interacts with WWP1; the interaction facilitates WWP1 interaction with the Crumbs complex and subsequent WWP1 translocation to the plasma membrane. WWP1 interaction with the Crumbs complex promotes WWP1 monoubiquitination of AMOTL2 which subsequently activates the Hippo signaling pathway. When ubiquitinated interacts with LATS2 (via UBA domain); the interaction promotes LATS2 phosphorylation of YAP1. Interacts (via PPXY motif) with WWTR1/TAZ (via WW domain); the interaction promotes WWTR1/TAZ localization to the cytoplasm and thereby inhibition of its transcriptional properties. Interacts with PHLDB2; interaction may facilitate PHLDB2 localization to the myotube podosome cortex that surrounds the core. Monoubiquitinated at Lys-347 and Lys-408 by Crumbs complex-bound WWP1. De-ubiquitinated at Lys-347 and Lys-408 by USP9X; the interaction may be promoted by cell contact inhibition. Deubiquitination of AMOTL2 negatively regulates Hippo signaling activation. In terms of processing, phosphorylation at Tyr-107 is necessary for efficient binding to SRC and synergistically functioning with SRC to activate the downstream MAPK pathway.

The protein resides in the recycling endosome. The protein localises to the cytoplasm. It is found in the cell projection. Its subcellular location is the podosome. It localises to the cell junction. Functionally, regulates the translocation of phosphorylated SRC to peripheral cell-matrix adhesion sites. Required for proper architecture of actin filaments. Plays a role in coupling actin fibers to cell junctions in endothelial cells and is therefore required for correct endothelial cell morphology via facilitating transcellular transmission of mechanical force resulting in endothelial cell elongation. Required for the anchoring of radial actin fibers to CDH1 junction complexes at the cell membrane which facilitates organization of radial actin fiber structure and cellular response to contractile forces. This contributes to maintenance of cell area, size, shape, epithelial sheet organization and trophectoderm cell properties that facilitate blastocyst zona hatching. Inhibits the Wnt/beta-catenin signaling pathway, probably by recruiting CTNNB1 to recycling endosomes and hence preventing its translocation to the nucleus. Participates in angiogenesis. Activates the Hippo signaling pathway in response to cell contact inhibition via interaction with and ubiquitination by Crumbs complex-bound WWP1. Ubiquitinated AMOTL2 then interacts with LATS2 which in turn phosphorylates YAP1, excluding it from the nucleus and localizing it to the cytoplasm and tight junctions, therefore ultimately repressing YAP1-driven transcription of target genes. Acts to inhibit WWTR1/TAZ transcriptional coactivator activity via sequestering WWTR1/TAZ in the cytoplasm and at tight junctions. Regulates the size and protein composition of the podosome cortex and core at myofibril neuromuscular junctions. Selectively promotes FGF-induced MAPK activation through SRC. May play a role in the polarity, proliferation and migration of endothelial cells. The polypeptide is Angiomotin-like protein 2 (Homo sapiens (Human)).